The following is a 233-amino-acid chain: Large ribosomal subunit protein uL1 (233 aa).

It belongs to the universal ribosomal protein uL1 family. In terms of assembly, part of the 50S ribosomal subunit.

Binds directly to 23S rRNA. The L1 stalk is quite mobile in the ribosome, and is involved in E site tRNA release. Its function is as follows. Protein L1 is also a translational repressor protein, it controls the translation of the L11 operon by binding to its mRNA. This chain is Large ribosomal subunit protein uL1, found in Psychrobacter sp. (strain PRwf-1).